The chain runs to 837 residues: Protein translocase subunit SecA (837 aa).

Residues Q85, 103 to 107 (GEGKT), and D493 each bind ATP. The Zn(2+) site is built by C821, C823, C832, and H833.

Belongs to the SecA family. In terms of assembly, monomer and homodimer. Part of the essential Sec protein translocation apparatus which comprises SecA, SecYEG and auxiliary proteins SecDF. Other proteins may also be involved. Requires Zn(2+) as cofactor.

The protein resides in the cell membrane. It is found in the cytoplasm. It catalyses the reaction ATP + H2O + cellular proteinSide 1 = ADP + phosphate + cellular proteinSide 2.. In terms of biological role, part of the Sec protein translocase complex. Interacts with the SecYEG preprotein conducting channel. Has a central role in coupling the hydrolysis of ATP to the transfer of proteins into and across the cell membrane, serving as an ATP-driven molecular motor driving the stepwise translocation of polypeptide chains across the membrane. The sequence is that of Protein translocase subunit SecA from Streptococcus pneumoniae (strain ATCC BAA-255 / R6).